Reading from the N-terminus, the 427-residue chain is Diaminobutyrate--2-oxoglutarate transaminase (427 aa).

Lys-269 is modified (N6-(pyridoxal phosphate)lysine).

This sequence belongs to the class-III pyridoxal-phosphate-dependent aminotransferase family. The cofactor is pyridoxal 5'-phosphate.

The enzyme catalyses L-2,4-diaminobutanoate + 2-oxoglutarate = L-aspartate 4-semialdehyde + L-glutamate. The protein operates within amine and polyamine biosynthesis; ectoine biosynthesis; L-ectoine from L-aspartate 4-semialdehyde: step 1/3. Functionally, catalyzes reversively the conversion of L-aspartate beta-semialdehyde (ASA) to L-2,4-diaminobutyrate (DABA) by transamination with L-glutamate. This chain is Diaminobutyrate--2-oxoglutarate transaminase (ectB), found in Marinococcus halophilus.